A 238-amino-acid polypeptide reads, in one-letter code: MENFDEVIKEYQKYLEGKEKTHKINSCKHPCCEEDNLKSVKNYFKVYHKKYIPSIIQKKKKERNEHAPPLLKDIQDKRCTNVFERLNDKQFYTGVQKTKFMELLKNNKNKSSYCYNNIKVFSTMLKKPCNYVVTPGTLGIQKYGIQTGRPKTIFLFNNEKKYDKGVYFLVKSYIKNIKSLCYEITKILQPSIGPTRKIYDQNFSLVRNVNDLINGGKYLCTSGDPPAPIRNLSLHFLT.

The interval 82–112 is partial p25alpha domain; that stretch reads VFERLNDKQFYTGVQKTKFMELLKNNKNKSS. In terms of domain architecture, Doublecortin spans 151–232; the sequence is KTIFLFNNEK…GDPPAPIRNL (82 aa).

In terms of assembly, interacts with alpha-tubulin 1 and beta-tubulin; the interaction stabilizes microtubule assembly.

Its subcellular location is the cytoplasm. The protein localises to the cytoskeleton. Its function is as follows. Involved in the stabilization of microtubules. Probably by controlling microtubules stabilization, plays a role in invasion, microneme secretion and parasite growth in host erythrocytes. This chain is Doublecortin domain-containing protein, found in Plasmodium falciparum (isolate 3D7).